Consider the following 338-residue polypeptide: Sporulation-specific protein 4 (338 aa).

The interval Gln14–Gln37 is disordered. Residues His22 to Gln37 are compositionally biased toward polar residues.

Its function is as follows. Not essential for sporulation. Might be a component of the cell wall. The protein is Sporulation-specific protein 4 (SPS4) of Saccharomyces cerevisiae (strain ATCC 204508 / S288c) (Baker's yeast).